The chain runs to 427 residues: Protein adenylyltransferase Fic (427 aa).

The chain crosses the membrane as a helical span at residues 17-37; it reads LLLASLAGLSIAIIVTHAPVF. TPR repeat units lie at residues 77 to 110 and 111 to 143; these read ALAALKAASAMKHGGKHSKAVKLFQQAVSLAPHH and PEILLQYGEFLEQHDVVQAEHLYNRALTANPLD. Positions 200 to 205 match the Inhibitory (S/T)XXXE(G/N) motif motif; the sequence is SNAIEG. Residues Glu204 and 286-289 each bind ATP; that span reads VSDH. One can recognise a Fido domain in the interval 255 to 390; that stretch reads ITIDDIIEIH…IRPFIRFVAR (136 aa). His333 is a catalytic residue. Residues 337-344, 369-370, and Asn377 contribute to the ATP site; these read DGNGRTAR and YY.

It belongs to the fic family. As to quaternary structure, homodimer.

The protein localises to the membrane. It catalyses the reaction L-tyrosyl-[protein] + ATP = O-(5'-adenylyl)-L-tyrosyl-[protein] + diphosphate. The catalysed reaction is L-threonyl-[protein] + ATP = 3-O-(5'-adenylyl)-L-threonyl-[protein] + diphosphate. It carries out the reaction 3-O-(5'-adenylyl)-L-threonyl-[protein] + H2O = L-threonyl-[protein] + AMP + H(+). With respect to regulation, the side chain of Glu-204 determines which of the two opposing activities (AMPylase or de-AMPylase) will take place. In response to endoplasmic reticulum stress, mediates de-AMPylase activity. Adenylyltransferase activity is inhibited by the inhibitory helix present at the N-terminus: Glu-204 binds ATP and competes with ATP-binding at Arg-344, thereby preventing adenylyltransferase activity. In unstressed cells, disengagement of Glu-204 promotes adenylyltransferase activity. Activation dissociates ATP-binding from Glu-204, allowing ordered binding of the entire ATP moiety with the alpha-phosphate in an orientation that is productive for accepting an incoming target hydroxyl side chain. Its function is as follows. Protein that can both mediate the addition of adenosine 5'-monophosphate (AMP) to specific residues of target proteins (AMPylation), and the removal of the same modification from target proteins (de-AMPylation), depending on the context. The side chain of Glu-204 determines which of the two opposing activities (AMPylase or de-AMPylase) will take place. Acts as a key regulator of the unfolded protein response (UPR) by mediating AMPylation or de-AMPylation of Hsc70-3/BiP. In unstressed cells, acts as an adenylyltransferase by mediating AMPylation of Hsc70-3/BiP, thereby inactivating it. In response to endoplasmic reticulum stress, acts as a phosphodiesterase by mediating removal of ATP (de-AMPylation) from Hsc70-3/BiP, leading to restore HSPA5/BiP activity. The polypeptide is Protein adenylyltransferase Fic (Nematostella vectensis (Starlet sea anemone)).